The sequence spans 272 residues: Dihydropteroate synthase (272 aa).

The 251-residue stretch at 1-251 (MIKTKIMGIL…GVRVHNVLLN (251 aa)) folds into the Pterin-binding domain. Asn-11 contacts Mg(2+). (7,8-dihydropterin-6-yl)methyl diphosphate-binding positions include Thr-51, Asp-89, Asn-108, Asp-172, Lys-208, and 244–246 (RVH).

It belongs to the DHPS family. In terms of assembly, homodimer. It depends on Mg(2+) as a cofactor.

The catalysed reaction is (7,8-dihydropterin-6-yl)methyl diphosphate + 4-aminobenzoate = 7,8-dihydropteroate + diphosphate. It functions in the pathway cofactor biosynthesis; tetrahydrofolate biosynthesis; 7,8-dihydrofolate from 2-amino-4-hydroxy-6-hydroxymethyl-7,8-dihydropteridine diphosphate and 4-aminobenzoate: step 1/2. Catalyzes the condensation of para-aminobenzoate (pABA) with 6-hydroxymethyl-7,8-dihydropterin diphosphate (DHPt-PP) to form 7,8-dihydropteroate (H2Pte), the immediate precursor of folate derivatives. In Staphylococcus epidermidis (strain ATCC 35984 / DSM 28319 / BCRC 17069 / CCUG 31568 / BM 3577 / RP62A), this protein is Dihydropteroate synthase (folP).